Reading from the N-terminus, the 624-residue chain is ABC transporter G family member 23 (624 aa).

The ABC transporter domain maps to 52–296 (LTVTNLSYTI…IAKLGFQIPE (245 aa)). ATP is bound at residue 84–91 (GPSGTGKS). The 211-residue stretch at 350 to 560 (TEISYLCSRF…PLESMVVNEY (211 aa)) folds into the ABC transmembrane type-2 domain. Helical transmembrane passes span 369–389 (LFLA…SVYT), 402–422 (LGLF…ALPI), 450–470 (IAFV…VYWI), 480–500 (FSFF…LVLF), 511–531 (GNSL…YFIP), and 595–615 (INVG…WGIL).

Belongs to the ABC transporter superfamily. ABCG family. Eye pigment precursor importer (TC 3.A.1.204) subfamily.

It is found in the membrane. This chain is ABC transporter G family member 23 (ABCG23), found in Arabidopsis thaliana (Mouse-ear cress).